The primary structure comprises 479 residues: Anaerobic nitric oxide reductase flavorubredoxin (479 aa).

Positions 30–210 (LRGSSYNSYL…PFSRLVTPKI (181 aa)) are zinc metallo-hydrolase. Fe cation is bound by residues histidine 79, glutamate 81, aspartate 83, histidine 147, aspartate 166, and histidine 227. The region spanning 254 to 393 (ITIFYDTMSN…LCREHGREIA (140 aa)) is the Flavodoxin-like domain. Residues 260–264 (TMSNN) and 342–369 (AFGSHGWSGGAVDRLSTRLQDAGFEMSL) contribute to the FMN site. Positions 423-474 (GPRMQCSVCQWIYDPAKGEPMQDVAPGTPWSEVPDNFLCPECSLGKDVFDEL) constitute a Rubredoxin-like domain. Fe cation-binding residues include cysteine 428, cysteine 431, cysteine 461, and cysteine 464.

It in the N-terminal section; belongs to the zinc metallo-hydrolase group 3 family. In terms of assembly, homotetramer. It depends on Fe cation as a cofactor. The cofactor is FMN.

Its subcellular location is the cytoplasm. Its pathway is nitrogen metabolism; nitric oxide reduction. Its function is as follows. Anaerobic nitric oxide reductase; uses NADH to detoxify nitric oxide (NO), protecting several 4Fe-4S NO-sensitive enzymes. Has at least 2 reductase partners, only one of which (NorW, flavorubredoxin reductase) has been identified. NO probably binds to the di-iron center; electrons enter from the NorW at rubredoxin and are transferred sequentially to the FMN center and the di-iron center. Also able to function as an aerobic oxygen reductase. This Escherichia coli (strain SMS-3-5 / SECEC) protein is Anaerobic nitric oxide reductase flavorubredoxin.